The primary structure comprises 251 residues: Triosephosphate isomerase (251 aa).

Residue 9-11 (NWK) participates in substrate binding. Histidine 95 acts as the Electrophile in catalysis. Glutamate 167 serves as the catalytic Proton acceptor. Residues glycine 173, serine 213, and 234-235 (GG) contribute to the substrate site.

It belongs to the triosephosphate isomerase family. In terms of assembly, homodimer.

The protein localises to the cytoplasm. The enzyme catalyses D-glyceraldehyde 3-phosphate = dihydroxyacetone phosphate. The protein operates within carbohydrate biosynthesis; gluconeogenesis. It functions in the pathway carbohydrate degradation; glycolysis; D-glyceraldehyde 3-phosphate from glycerone phosphate: step 1/1. Its function is as follows. Involved in the gluconeogenesis. Catalyzes stereospecifically the conversion of dihydroxyacetone phosphate (DHAP) to D-glyceraldehyde-3-phosphate (G3P). The sequence is that of Triosephosphate isomerase from Pelobacter propionicus (strain DSM 2379 / NBRC 103807 / OttBd1).